Here is a 199-residue protein sequence, read N- to C-terminus: VAMP-like protein YKT61 (199 aa).

The Longin domain maps to Leu7–Asp133. The region spanning Lys139–Leu199 is the v-SNARE coiled-coil homology domain. Cys195 carries S-palmitoyl cysteine lipidation. At Cys196 the chain carries Cysteine methyl ester. Cys196 is lipidated: S-geranylgeranyl cysteine. Residues Thr197–Leu199 constitute a propeptide, removed in mature form.

The protein belongs to the synaptobrevin family. As to quaternary structure, interacts with SYP41. Core constituent of the SNARE complex required for membrane fusion at the trans-Golgi network. In terms of tissue distribution, expressed ubiquitously in roots, stems, flowers and leaves.

The protein resides in the cell membrane. Functionally, may be involved in the secretory pathway. Essential for membrane fusion mediated by either SYP41 or SYP61; triggers the fusion of phospholipid vesicles containing SYP41 or SYP61 and VTI12. The protein is VAMP-like protein YKT61 of Arabidopsis thaliana (Mouse-ear cress).